The primary structure comprises 351 residues: Photosystem II D2 protein (351 aa).

A helical transmembrane segment spans residues Cys-39–Thr-59. His-116 contributes to the chlorophyll a binding site. A helical membrane pass occupies residues Gly-123–Pro-139. Residues Gln-128 and Asn-141 each coordinate pheophytin a. A helical membrane pass occupies residues Leu-151–Ser-164. His-196 contributes to the chlorophyll a binding site. The helical transmembrane segment at Gly-206–Asp-226 threads the bilayer. A plastoquinone-binding residues include His-213 and Phe-260. Position 213 (His-213) interacts with Fe cation. Position 267 (His-267) interacts with Fe cation. A helical membrane pass occupies residues Gly-277–Arg-293.

Belongs to the reaction center PufL/M/PsbA/D family. PSII is composed of 1 copy each of membrane proteins PsbA, PsbB, PsbC, PsbD, PsbE, PsbF, PsbH, PsbI, PsbJ, PsbK, PsbL, PsbM, PsbT, PsbX, PsbY, PsbZ, Psb30/Ycf12, peripheral proteins PsbO, CyanoQ (PsbQ), PsbU, PsbV and a large number of cofactors. It forms dimeric complexes. It depends on The D1/D2 heterodimer binds P680, chlorophylls that are the primary electron donor of PSII, and subsequent electron acceptors. It shares a non-heme iron and each subunit binds pheophytin, quinone, additional chlorophylls, carotenoids and lipids. There is also a Cl(-1) ion associated with D1 and D2, which is required for oxygen evolution. The PSII complex binds additional chlorophylls, carotenoids and specific lipids. as a cofactor.

It localises to the cellular thylakoid membrane. It catalyses the reaction 2 a plastoquinone + 4 hnu + 2 H2O = 2 a plastoquinol + O2. Functionally, photosystem II (PSII) is a light-driven water:plastoquinone oxidoreductase that uses light energy to abstract electrons from H(2)O, generating O(2) and a proton gradient subsequently used for ATP formation. It consists of a core antenna complex that captures photons, and an electron transfer chain that converts photonic excitation into a charge separation. The D1/D2 (PsbA/PsbD) reaction center heterodimer binds P680, the primary electron donor of PSII as well as several subsequent electron acceptors. D2 is needed for assembly of a stable PSII complex. This is Photosystem II D2 protein from Prochlorothrix hollandica.